The chain runs to 213 residues: Pyrrolidone-carboxylate peptidase (213 aa).

Catalysis depends on residues Glu-78, Cys-141, and His-165.

Belongs to the peptidase C15 family. As to quaternary structure, homotetramer.

It is found in the cytoplasm. It carries out the reaction Release of an N-terminal pyroglutamyl group from a polypeptide, the second amino acid generally not being Pro.. Removes 5-oxoproline from various penultimate amino acid residues except L-proline. This Clostridium perfringens (strain SM101 / Type A) protein is Pyrrolidone-carboxylate peptidase.